The sequence spans 211 residues: Tudor-interacting repair regulator protein (211 aa).

Glycyl lysine isopeptide (Lys-Gly) (interchain with G-Cter in ubiquitin) cross-links involve residues lysine 10 and lysine 151. An interaction with PXN region spans residues 118-205; sequence TLEQLHAVEI…TEKQKKALEK (88 aa).

It belongs to the Nudix hydrolase family. TIRR subfamily. In terms of assembly, homodimer. Interacts with TP53BP1 (via the Tudor-like domain); interaction is abolished following DNA damage and TP53BP1 phosphorylation by ATM. Interacts (via the cytoplasmic part) with SDC4. Interacts with TGFB1I1 and PXN.

It is found in the nucleus. Functionally, key regulator of TP53BP1 required to stabilize TP53BP1 and regulate its recruitment to chromatin. In absence of DNA damage, interacts with the tandem Tudor-like domain of TP53BP1, masking the region that binds histone H4 dimethylated at 'Lys-20' (H4K20me2), thereby preventing TP53BP1 recruitment to chromatin and maintaining TP53BP1 localization to the nucleus. Following DNA damage, ATM-induced phosphorylation of TP53BP1 and subsequent recruitment of RIF1 leads to dissociate NUDT16L1/TIRR from TP53BP1, unmasking the tandem Tudor-like domain and allowing recruitment of TP53BP1 to DNA double strand breaks (DSBs). Binds U8 snoRNA. The protein is Tudor-interacting repair regulator protein of Mus musculus (Mouse).